The following is a 196-amino-acid chain: Sulfur-rich protein (196 aa).

3 consecutive transmembrane segments (helical) span residues 34-54, 76-96, and 105-125; these read VTAG…LIGW, ITLL…MFIF, and FWLI…SLCF.

The protein resides in the membrane. The protein is Sulfur-rich protein (srp) of Chlamydia pneumoniae (Chlamydophila pneumoniae).